We begin with the raw amino-acid sequence, 459 residues long: Cysteine--tRNA ligase (459 aa).

A Zn(2+)-binding site is contributed by Cys29. Positions 31 to 41 (PTVYDRAHIGN) match the 'HIGH' region motif. Positions 209, 234, and 238 each coordinate Zn(2+). Positions 266-270 (KMSKS) match the 'KMSKS' region motif. Lys269 contributes to the ATP binding site.

The protein belongs to the class-I aminoacyl-tRNA synthetase family. Monomer. Zn(2+) is required as a cofactor.

The protein localises to the cytoplasm. The enzyme catalyses tRNA(Cys) + L-cysteine + ATP = L-cysteinyl-tRNA(Cys) + AMP + diphosphate. This chain is Cysteine--tRNA ligase, found in Paramagnetospirillum magneticum (strain ATCC 700264 / AMB-1) (Magnetospirillum magneticum).